The following is a 285-amino-acid chain: Undecaprenyl-diphosphatase (285 aa).

7 consecutive transmembrane segments (helical) span residues 40 to 60 (GPLI…VYFF), 89 to 109 (LFWW…AIKL), 137 to 157 (DLIA…DWLG), 171 to 191 (GLIV…RSGV), 209 to 229 (FSFL…VPEI), 241 to 261 (LIAG…LMNF), and 265 to 285 (ASML…LAFF).

This sequence belongs to the UppP family.

It is found in the cell inner membrane. The enzyme catalyses di-trans,octa-cis-undecaprenyl diphosphate + H2O = di-trans,octa-cis-undecaprenyl phosphate + phosphate + H(+). In terms of biological role, catalyzes the dephosphorylation of undecaprenyl diphosphate (UPP). Confers resistance to bacitracin. This Erythrobacter litoralis (strain HTCC2594) protein is Undecaprenyl-diphosphatase.